Here is a 352-residue protein sequence, read N- to C-terminus: MEAIRKELSRSYQELNEEAEPVAIDPEEAEDEEKEQEEAASAVAPDRDSDRSSPPVRFSRTCLKNFFSVLLILVYLLLMGVAVFLVYQTITDFRDKLKHPVMSVSYKEVNMYDAPGIALYPGKARLLSCEHHWYDHIPPLKDPGQPGENTCVTQDISYIDPYTNKTMKHALIVQGPRDVRRRELVFLQFHLNETKQDFSAIDYLLFSSYEAFLKSHDQVKFMQDCESSFSSWKFSGGFRTWVKMSLVKTKEEDGSQSVEFRQETSVVNFIDRRETPDKGDQLFFVVFEWKDPYIQEIQDIITANPWSMIALLCSVFLVLFKAADFAKLSVKWMIKVRRRHLKKRARELNHIS.

The tract at residues M1–P55 is disordered. The Cytoplasmic portion of the chain corresponds to M1–N65. Over residues L15–E38 the composition is skewed to acidic residues. A helical transmembrane segment spans residues F66–V86. Topologically, residues Y87–D299 are extracellular. Residues I300–F320 form a helical membrane-spanning segment. The Cytoplasmic segment spans residues K321 to S352.

This sequence belongs to the proton-activated chloride channel family.

It is found in the cell membrane. It carries out the reaction chloride(in) = chloride(out). Functionally, chloride channel gated by pH that facilitates the entry of chloride ions into cells upon exposure to extracellular acidic pH. This Xenopus tropicalis (Western clawed frog) protein is Proton-activated chloride channel.